Reading from the N-terminus, the 612-residue chain is MSNSHPLRPFTAVGEIDHVHILSEHIGALLIGEEYGDVTFVVEKKRFPAHRVILAARCQYFRALLYGGMRESQPEAEIPLQDTTAEAFTMLLRYIYTGRATLTDEKEEVLLDFLSLAHKYGFPELEDSTSEYLCTILNIQNVCMTFDVASLYSLPKLTCMCCMFMDRNAQEVLASDGFLSLSKTALLNIVLRDSFAAPEKDIFLALLNWCKHNAKENHAEIMQAVRLPLMSLTELLNVVRPSGLLSPDAILDAIKVRSESRDMDLNYRGMLIPEENIATMKYGAQVVKGELKSALLDGDTQNYDLDHGFSRHPIDDDCRSGIEIKLGQPSIINHIRLLLWDRDSRSYSYFIEVSMDELDWIRVIDHSHYLCRSWQKLYFPARVCRYIRIVGTHNTVNKIFHIVAFECMFTNKAFTLEKGLIAPMENVATIADCASVIEGVSRSRNALLNGDTKNYDWDSGYTCHQLGSGAIVVQLAQPYMIGSIRLLLWDCDDRSYSYYVEVSTNQQQWTMVADRTKVSCKSWQSVTFERQPASFIRIVGTHNTANEVFHCVHFECPEQQSTQKEDSSEEPGTGDLSTPSQQLDPHAPRAPSASSLPPSPGPNLHSPNQQNQ.

The 69-residue stretch at 36–104 folds into the BTB domain; it reads GDVTFVVEKK…IYTGRATLTD (69 aa). A BACK domain is found at 142–240; that stretch reads VCMTFDVASL…SLTELLNVVR (99 aa). Positions 559–612 are disordered; sequence QQSTQKEDSSEEPGTGDLSTPSQQLDPHAPRAPSASSLPPSPGPNLHSPNQQNQ. Over residues 589-612 the composition is skewed to low complexity; sequence RAPSASSLPPSPGPNLHSPNQQNQ.

As to expression, detected throughout the gray matter of the spinal cord including the motor neurons (at protein level). In the brain, detected in the neurons of the hippocampus and in the Purkinje cells of the cerebellum (at protein level). Also detected in the terospenial cortex, bed nucleus of the stria terminalis (BST) and the ventrolateral thalamus (VL) (at protein level).

This is BTB/POZ domain-containing protein 9 (Btbd9) from Rattus norvegicus (Rat).